The following is a 598-amino-acid chain: Elongation factor 4 (598 aa).

A tr-type G domain is found at 2-184 (NNIRNFAIIA…AIVAKLPAPQ (183 aa)). GTP is bound by residues 14–19 (DHGKST) and 131–134 (NKVD).

The protein belongs to the TRAFAC class translation factor GTPase superfamily. Classic translation factor GTPase family. LepA subfamily.

It is found in the cell membrane. The catalysed reaction is GTP + H2O = GDP + phosphate + H(+). Functionally, required for accurate and efficient protein synthesis under certain stress conditions. May act as a fidelity factor of the translation reaction, by catalyzing a one-codon backward translocation of tRNAs on improperly translocated ribosomes. Back-translocation proceeds from a post-translocation (POST) complex to a pre-translocation (PRE) complex, thus giving elongation factor G a second chance to translocate the tRNAs correctly. Binds to ribosomes in a GTP-dependent manner. The sequence is that of Elongation factor 4 from Wolbachia sp. subsp. Drosophila simulans (strain wRi).